Reading from the N-terminus, the 188-residue chain is Inosine triphosphate pyrophosphatase (188 aa).

9–14 (TGNAKK) provides a ligand contact to ITP. Position 39 (Glu39) interacts with Mg(2+). Residues Lys51, 67–68 (DT), Lys84, 143–146 (FGWD), Lys166, and 171–172 (HR) each bind ITP.

It belongs to the HAM1 NTPase family. As to quaternary structure, homodimer. The cofactor is Mg(2+). Requires Mn(2+) as cofactor.

It localises to the cytoplasm. The enzyme catalyses ITP + H2O = IMP + diphosphate + H(+). The catalysed reaction is dITP + H2O = dIMP + diphosphate + H(+). It catalyses the reaction XTP + H2O = XMP + diphosphate + H(+). Functionally, pyrophosphatase that hydrolyzes non-canonical purine nucleotides such as inosine triphosphate (ITP), deoxyinosine triphosphate (dITP) or xanthosine 5'-triphosphate (XTP) to their respective monophosphate derivatives. The enzyme does not distinguish between the deoxy- and ribose forms. Probably excludes non-canonical purines from RNA and DNA precursor pools, thus preventing their incorporation into RNA and DNA and avoiding chromosomal lesions. The sequence is that of Inosine triphosphate pyrophosphatase from Anopheles gambiae (African malaria mosquito).